A 151-amino-acid chain; its full sequence is Non-specific lipid transfer protein GPI-anchored 30 (151 aa).

The N-terminal stretch at Met1–Gly22 is a signal peptide. 4 disulfides stabilise this stretch: Cys32/Cys69, Cys39/Cys53, Cys54/Cys97, and Cys67/Cys106. N-linked (GlcNAc...) asparagine glycosylation occurs at Asn44. Ser120 carries the GPI-anchor amidated serine lipid modification. Residues Ser121–Ser151 constitute a propeptide, removed in mature form.

It belongs to the plant LTP family. As to expression, expressed in vascular tissues of all organs. Expressed in seedlings, preferentially in hypocotyls and roots. Also observed in siliques.

The protein localises to the cell membrane. Lipid transfer protein that promotes the number of phloem (pro)cambial and pericycle cells. In Arabidopsis thaliana (Mouse-ear cress), this protein is Non-specific lipid transfer protein GPI-anchored 30.